Here is a 74-residue protein sequence, read N- to C-terminus: Protein DELETION OF SUV3 SUPPRESSOR 1(I) (74 aa).

Residues 35–74 (EKEEVKEVSQQWEDDWDDDDVNDDFSRQLRKELENGTDKK) are disordered. Positions 46–57 (WEDDWDDDDVND) are enriched in acidic residues. Basic and acidic residues predominate over residues 58–74 (DFSRQLRKELENGTDKK).

This sequence belongs to the DSS1/SEM1 family. Part of the 26S proteasome. Interacts with BRCA2A and BRCA2B. Interacts with UCH1 and UCH2. Can form a tripartite complex with both RAD51 and BRCA2B or both DMC1 and BRCA2B.

Its function is as follows. Subunit of the 26S proteasome which plays a role in ubiquitin-dependent proteolysis. The polypeptide is Protein DELETION OF SUV3 SUPPRESSOR 1(I) (Arabidopsis thaliana (Mouse-ear cress)).